Consider the following 394-residue polypeptide: Elongation factor Tu (394 aa).

The tr-type G domain occupies 10 to 204 (KPHINVGTIG…HLDNYIPEPK (195 aa)). The interval 19–26 (GHVDHGKT) is G1. Residue 19-26 (GHVDHGKT) coordinates GTP. Thr26 is a binding site for Mg(2+). The segment at 60 to 64 (GITIN) is G2. Residues 81-84 (DCPG) are G3. Residues 81-85 (DCPGH) and 136-139 (NKCD) contribute to the GTP site. Positions 136-139 (NKCD) are G4. Residues 174–176 (SAL) form a G5 region.

It belongs to the TRAFAC class translation factor GTPase superfamily. Classic translation factor GTPase family. EF-Tu/EF-1A subfamily. In terms of assembly, monomer.

Its subcellular location is the cytoplasm. The enzyme catalyses GTP + H2O = GDP + phosphate + H(+). Functionally, GTP hydrolase that promotes the GTP-dependent binding of aminoacyl-tRNA to the A-site of ribosomes during protein biosynthesis. The chain is Elongation factor Tu from Wigglesworthia glossinidia brevipalpis.